We begin with the raw amino-acid sequence, 612 residues long: Cytokine-like nuclear factor N-PAC (612 aa).

The PWWP domain occupies 22–81 (PKDLIWAKMKGFTPWPGMIVEPPLDLLTQQRRANTKCVFFFGSRNFAWIEENNIKPFEGP). The tract at residues 168–270 (AVEGENNADS…GASSSSPTAR (103 aa)) is disordered. Low complexity-rich tracts occupy residues 177-193 (SSAS…TAKS) and 201-220 (AKPV…TTKS). Positions 228–240 (AHQTPTGANTSGL) are enriched in polar residues. The interval 276–279 (DDLL) is interaction with histone H3. The dehydrogenase domain stretch occupies residues 319-612 (RDIVPSELTF…SSAVFVRSRF (294 aa)). NAD(+) contacts are provided by residues 329-343 (GFLG…IVKD), threonine 421, and arginine 564.

This sequence belongs to the HIBADH-related family. NP60 subfamily. As to quaternary structure, binds to mononucleosomes. Interacts with male-specific lethal (MSL) histone acetyltransferase complex at least composed of mof, msl-1, msl-2 and msl-3.

Its subcellular location is the chromosome. Functionally, nucleosome-destabilizing factor that is recruited to genes during transcriptional activation and colocalizes with a subset of trimethylated 'Lys-36' histone H3 (H3K36me3)-enriched regions. Binds DNA (in vitro). Facilitates Pol II transcription through nucleosomes. Facilitates male-specific lethal (MSL) histone acetyltransferase complex targeting to active genes on the X chromosome. Stimulates the acetylation of 'Lys-56' of nucleosomal histone H3 (H3K56ac) by nej. This chain is Cytokine-like nuclear factor N-PAC, found in Drosophila pseudoobscura pseudoobscura (Fruit fly).